An 893-amino-acid polypeptide reads, in one-letter code: Serine/threonine-protein kinase/endoribonuclease IRE1 (893 aa).

A signal peptide spans 1–19 (MRSLRRVLLQLVLLAGVAF). The Lumenal segment spans residues 20 to 379 (RGVRFDDAAD…NSVTKFSYRW (360 aa)). N-linked (GlcNAc...) asparagine glycosylation is found at asparagine 105, asparagine 158, asparagine 259, and asparagine 351. A helical transmembrane segment spans residues 380 to 397 (LFPTFLMLLIMACLVKLA). Topologically, residues 398-893 (DASKYCRQFV…FSKYFLGSSA (496 aa)) are cytoplasmic. Residues 451-478 (ASDKEGNGTGGSTEAQSNKAHDSTNVEL) are disordered. In terms of domain architecture, Protein kinase spans 491-759 (CVYSKEIGKG…AVYVMHHPFF (269 aa)). ATP contacts are provided by residues 497–505 (IGKGSNGTV) and lysine 519. The active-site Proton acceptor is the aspartate 625. A KEN domain is found at 762–890 (PELCLSFLRD…EEAFSKYFLG (129 aa)).

The protein belongs to the protein kinase superfamily. Ser/Thr protein kinase family. Homodimer; disulfide-linked. Dimer formation is driven by hydrophobic interactions within the N-terminal luminal domains and stabilized by disulfide bridges. In terms of processing, autophosphorylated. Expressed in roots, nodes, internodes, leaf sheaths, leaf blades, young ears and mature ears.

The protein localises to the endoplasmic reticulum membrane. It carries out the reaction L-seryl-[protein] + ATP = O-phospho-L-seryl-[protein] + ADP + H(+). The enzyme catalyses L-threonyl-[protein] + ATP = O-phospho-L-threonyl-[protein] + ADP + H(+). In terms of biological role, involved in endoplasmic reticulum (ER) stress response. Senses unfolded proteins in the lumen of the ER via its N-terminal domain which leads to enzyme auto-activation. The active endoribonuclease domain splices bZIP50 mRNA to generate a new C-terminus, converting it into a potent unfolded-protein response (UPR) transcriptional activator, which then induces transcription of UPR target genes, such as luminal-binding protein (BiP) chaperones. The polypeptide is Serine/threonine-protein kinase/endoribonuclease IRE1 (Oryza sativa subsp. japonica (Rice)).